Here is a 312-residue protein sequence, read N- to C-terminus: Ribonuclease HIII (312 aa).

The RNase H type-2 domain maps to 95–311; that stretch reads FNCIGSDEAG…REKAQKILKP (217 aa). Positions 101, 102, and 206 each coordinate a divalent metal cation.

This sequence belongs to the RNase HII family. RnhC subfamily. Mn(2+) is required as a cofactor. Requires Mg(2+) as cofactor.

It is found in the cytoplasm. The enzyme catalyses Endonucleolytic cleavage to 5'-phosphomonoester.. Functionally, endonuclease that specifically degrades the RNA of RNA-DNA hybrids. The chain is Ribonuclease HIII from Staphylococcus aureus (strain USA300).